Here is a 123-residue protein sequence, read N- to C-terminus: Small ribosomal subunit protein uS12cz/uS12cy (123 aa).

The protein belongs to the universal ribosomal protein uS12 family. As to quaternary structure, part of the 30S ribosomal subunit.

It localises to the plastid. Its subcellular location is the chloroplast. With S4 and S5 plays an important role in translational accuracy. Located at the interface of the 30S and 50S subunits. The sequence is that of Small ribosomal subunit protein uS12cz/uS12cy (rps12-A) from Gossypium barbadense (Sea Island cotton).